The following is a 31-amino-acid chain: Superoxide dismutase [Cu-Zn] (31 aa).

The protein belongs to the Cu-Zn superoxide dismutase family. The cofactor is Cu cation. Zn(2+) serves as cofactor.

Its subcellular location is the cytoplasm. It carries out the reaction 2 superoxide + 2 H(+) = H2O2 + O2. In terms of biological role, destroys radicals which are normally produced within the cells and which are toxic to biological systems. In Striga hermonthica (Purple witchweed), this protein is Superoxide dismutase [Cu-Zn].